We begin with the raw amino-acid sequence, 142 residues long: Large ribosomal subunit protein uL13 (142 aa).

This sequence belongs to the universal ribosomal protein uL13 family. As to quaternary structure, part of the 50S ribosomal subunit.

This protein is one of the early assembly proteins of the 50S ribosomal subunit, although it is not seen to bind rRNA by itself. It is important during the early stages of 50S assembly. This chain is Large ribosomal subunit protein uL13, found in Coxiella burnetii (strain CbuK_Q154) (Coxiella burnetii (strain Q154)).